A 409-amino-acid chain; its full sequence is MSRYVFTSESVTEGHPDKICDQVSDAVLDACLSEDPTSRVACEAVVNTGLCLITGEITSKAEVDFNKLVREVIKSIGYRSASDGGFDANSCAVLVALDQQSSDIAQGVNEAEDHSTDPLDQVGAGDQGIMFGFACDETPELMPLPISLAHRLARRLALVRHQQLIDYLLPDGKTQVSVSYENGVPCSIDTILISTQHKSEVDGITLEEEIQKRIAKDLWKFVVEPATEDLPLKPAKESTRFLVNPTGKFVIGGPQGDAGLTGRKIIVDTYGGYARHGGGAFSGKDPTKVDRSAAYAARFVAKALVAANLAKKVEVQLSYAIGVAKPISILVDSFGTGKVSDSELTQLVQDQFDLRPGAIIKAFDLQNLPSVRGGRFYRDTAAYGHFGRTDILLPWEDVSQKAKELSLLK.

Position 15 (histidine 15) interacts with ATP. Aspartate 17 contacts Mg(2+). Glutamate 43 lines the K(+) pocket. Residues glutamate 56 and glutamine 100 each contribute to the L-methionine site. Positions 100–110 are flexible loop; it reads QSSDIAQGVNE. ATP contacts are provided by residues 171–173, 248–249, aspartate 257, 263–264, alanine 280, and lysine 284; these read DGK, KF, and RK. Aspartate 257 lines the L-methionine pocket. Residue lysine 288 coordinates L-methionine.

This sequence belongs to the AdoMet synthase family. Homotetramer; dimer of dimers. Requires Mg(2+) as cofactor. The cofactor is K(+).

The protein resides in the cytoplasm. The catalysed reaction is L-methionine + ATP + H2O = S-adenosyl-L-methionine + phosphate + diphosphate. It functions in the pathway amino-acid biosynthesis; S-adenosyl-L-methionine biosynthesis; S-adenosyl-L-methionine from L-methionine: step 1/1. Catalyzes the formation of S-adenosylmethionine (AdoMet) from methionine and ATP. The overall synthetic reaction is composed of two sequential steps, AdoMet formation and the subsequent tripolyphosphate hydrolysis which occurs prior to release of AdoMet from the enzyme. The chain is S-adenosylmethionine synthase from Prochlorococcus marinus (strain NATL1A).